A 513-amino-acid chain; its full sequence is MQLNSTEISELIKKRIAQFEVINEARNTGTIVSVSDGIIRIHGLSDVMQGEMIALPGNRYAMALNLERDSVGAVVMGPYSDLAEGMEVQCTGRILEVPVGRGLLGRVVNTLGQPIDGKGEIKNDGFSPVEVIAPGVIERKSVDQPVQTGYKAVDSMVPIGRGQRELIIGDRQTGKTALAIDAIINQRDSGIKCIYVAIGQKASTIANVVRKLEEHGALQNTIVVVASASESAALQYLAPYSGCAMGEYFRDRGEDALIVYDDLSKQAVAYRQISLLLRRPPGREAFPGDVFYLHSRLLERASRVSEEYVEKFTKGEVKGKTGSLTALPIIETQAGDVSAFVPTNVISITDGQIFLESNLFNSGIRPAVNPGISVSRVGGAAQTKVVKKLAGGIRTALAQYRELAAFAQFASDLDEATRKQLSHGQKVTELLKQKQYSPLSVAEQALVLFAVEFGYLDDVELNRIGTFETALLEYANYNYADFMAELTKTGNYDDEIKNTLKTVLDQFKANVAW.

169–176 (GDRQTGKT) is an ATP binding site.

It belongs to the ATPase alpha/beta chains family. In terms of assembly, F-type ATPases have 2 components, CF(1) - the catalytic core - and CF(0) - the membrane proton channel. CF(1) has five subunits: alpha(3), beta(3), gamma(1), delta(1), epsilon(1). CF(0) has three main subunits: a(1), b(2) and c(9-12). The alpha and beta chains form an alternating ring which encloses part of the gamma chain. CF(1) is attached to CF(0) by a central stalk formed by the gamma and epsilon chains, while a peripheral stalk is formed by the delta and b chains.

It localises to the cell inner membrane. The enzyme catalyses ATP + H2O + 4 H(+)(in) = ADP + phosphate + 5 H(+)(out). Functionally, produces ATP from ADP in the presence of a proton gradient across the membrane. The alpha chain is a regulatory subunit. The protein is ATP synthase subunit alpha of Histophilus somni (strain 2336) (Haemophilus somnus).